Consider the following 145-residue polypeptide: CASP-like protein SELMODRAFT_406854 (145 aa).

The Cytoplasmic portion of the chain corresponds to 1-31; sequence MGVASQSSVANEAGAAPEASIQQTLRGFSSP. The helical transmembrane segment at 32–52 threads the bilayer; the sequence is TSLLLRIATAVLCTLTLAFLV. Residues 53–75 lie on the Extracellular side of the membrane; that stretch reads TSKERKEIASIDIVAIWSNSKAL. The chain crosses the membrane as a helical span at residues 76–96; the sequence is IFLAVVSGICLGYSLLHAAVF. Residues 97-112 are Cytoplasmic-facing; sequence LVMLSGNRKPLARKKA. The helical transmembrane segment at 113-133 threads the bilayer; that stretch reads LDWMVFLADQVFFKIFCWFSI. At 134–145 the chain is on the extracellular side; the sequence is RVSSRRSKAGFV.

This sequence belongs to the Casparian strip membrane proteins (CASP) family. In terms of assembly, homodimer and heterodimers.

It localises to the cell membrane. This Selaginella moellendorffii (Spikemoss) protein is CASP-like protein SELMODRAFT_406854.